Consider the following 181-residue polypeptide: Crossover junction endodeoxyribonuclease RuvC (181 aa).

Catalysis depends on residues Asp7, Glu67, and Asp139. Mg(2+) contacts are provided by Asp7, Glu67, and Asp139.

This sequence belongs to the RuvC family. In terms of assembly, homodimer which binds Holliday junction (HJ) DNA. The HJ becomes 2-fold symmetrical on binding to RuvC with unstacked arms; it has a different conformation from HJ DNA in complex with RuvA. In the full resolvosome a probable DNA-RuvA(4)-RuvB(12)-RuvC(2) complex forms which resolves the HJ. Mg(2+) serves as cofactor.

It is found in the cytoplasm. The catalysed reaction is Endonucleolytic cleavage at a junction such as a reciprocal single-stranded crossover between two homologous DNA duplexes (Holliday junction).. In terms of biological role, the RuvA-RuvB-RuvC complex processes Holliday junction (HJ) DNA during genetic recombination and DNA repair. Endonuclease that resolves HJ intermediates. Cleaves cruciform DNA by making single-stranded nicks across the HJ at symmetrical positions within the homologous arms, yielding a 5'-phosphate and a 3'-hydroxyl group; requires a central core of homology in the junction. The consensus cleavage sequence is 5'-(A/T)TT(C/G)-3'. Cleavage occurs on the 3'-side of the TT dinucleotide at the point of strand exchange. HJ branch migration catalyzed by RuvA-RuvB allows RuvC to scan DNA until it finds its consensus sequence, where it cleaves and resolves the cruciform DNA. In Cupriavidus necator (strain ATCC 17699 / DSM 428 / KCTC 22496 / NCIMB 10442 / H16 / Stanier 337) (Ralstonia eutropha), this protein is Crossover junction endodeoxyribonuclease RuvC.